The chain runs to 520 residues: 2-isopropylmalate synthase (520 aa).

The Pyruvate carboxyltransferase domain occupies 5-267 (VIIFDTTLRD…YTNINHQEIY (263 aa)). Mn(2+)-binding residues include D14, H202, H204, and N238. The tract at residues 392 to 520 (HLDNFNIQSG…RIQQNTKEMV (129 aa)) is regulatory domain.

Belongs to the alpha-IPM synthase/homocitrate synthase family. LeuA type 1 subfamily. As to quaternary structure, homodimer. Mn(2+) serves as cofactor.

The protein resides in the cytoplasm. It catalyses the reaction 3-methyl-2-oxobutanoate + acetyl-CoA + H2O = (2S)-2-isopropylmalate + CoA + H(+). Its pathway is amino-acid biosynthesis; L-leucine biosynthesis; L-leucine from 3-methyl-2-oxobutanoate: step 1/4. Functionally, catalyzes the condensation of the acetyl group of acetyl-CoA with 3-methyl-2-oxobutanoate (2-ketoisovalerate) to form 3-carboxy-3-hydroxy-4-methylpentanoate (2-isopropylmalate). The sequence is that of 2-isopropylmalate synthase from Photorhabdus laumondii subsp. laumondii (strain DSM 15139 / CIP 105565 / TT01) (Photorhabdus luminescens subsp. laumondii).